Here is a 419-residue protein sequence, read N- to C-terminus: UDP-N-acetylglucosamine 1-carboxyvinyltransferase (419 aa).

Lysine 22–asparagine 23 serves as a coordination point for phosphoenolpyruvate. UDP-N-acetyl-alpha-D-glucosamine is bound at residue arginine 92. Residue cysteine 116 is the Proton donor of the active site. Cysteine 116 is modified (2-(S-cysteinyl)pyruvic acid O-phosphothioketal). Residues arginine 121–leucine 125, aspartate 306, and isoleucine 328 each bind UDP-N-acetyl-alpha-D-glucosamine.

Belongs to the EPSP synthase family. MurA subfamily.

The protein resides in the cytoplasm. It catalyses the reaction phosphoenolpyruvate + UDP-N-acetyl-alpha-D-glucosamine = UDP-N-acetyl-3-O-(1-carboxyvinyl)-alpha-D-glucosamine + phosphate. It functions in the pathway cell wall biogenesis; peptidoglycan biosynthesis. Its function is as follows. Cell wall formation. Adds enolpyruvyl to UDP-N-acetylglucosamine. Target for the antibiotic fosfomycin. Involved in heteroresistance to antibiotic fosfomycin. Heteroresistance is the ability of a clonal population to grow one or several subpopulations at a frequency of 10(-7) to 10(-3) in the presence of a higher antibiotic concentration than that predicted to be effective by measurement of the minimum inhibitory concentration (MIC). This is UDP-N-acetylglucosamine 1-carboxyvinyltransferase from Streptococcus pneumoniae serotype 2 (strain D39 / NCTC 7466).